The chain runs to 314 residues: Ribosomal RNA small subunit methyltransferase H (314 aa).

S-adenosyl-L-methionine-binding positions include 37–39, aspartate 57, phenylalanine 84, aspartate 105, and glutamine 112; that span reads GSH.

Belongs to the methyltransferase superfamily. RsmH family.

Its subcellular location is the cytoplasm. The catalysed reaction is cytidine(1402) in 16S rRNA + S-adenosyl-L-methionine = N(4)-methylcytidine(1402) in 16S rRNA + S-adenosyl-L-homocysteine + H(+). Functionally, specifically methylates the N4 position of cytidine in position 1402 (C1402) of 16S rRNA. This is Ribosomal RNA small subunit methyltransferase H from Fusobacterium nucleatum subsp. nucleatum (strain ATCC 25586 / DSM 15643 / BCRC 10681 / CIP 101130 / JCM 8532 / KCTC 2640 / LMG 13131 / VPI 4355).